Consider the following 238-residue polypeptide: Ribonuclease PH (238 aa).

Residues R86 and G124–R126 each bind phosphate.

This sequence belongs to the RNase PH family. In terms of assembly, homohexameric ring arranged as a trimer of dimers.

The enzyme catalyses tRNA(n+1) + phosphate = tRNA(n) + a ribonucleoside 5'-diphosphate. In terms of biological role, phosphorolytic 3'-5' exoribonuclease that plays an important role in tRNA 3'-end maturation. Removes nucleotide residues following the 3'-CCA terminus of tRNAs; can also add nucleotides to the ends of RNA molecules by using nucleoside diphosphates as substrates, but this may not be physiologically important. Probably plays a role in initiation of 16S rRNA degradation (leading to ribosome degradation) during starvation. This chain is Ribonuclease PH, found in Caulobacter vibrioides (strain ATCC 19089 / CIP 103742 / CB 15) (Caulobacter crescentus).